A 139-amino-acid chain; its full sequence is Large ribosomal subunit protein uL16 (139 aa).

A compositionally biased stretch (basic residues) spans methionine 1–methionine 17. The interval methionine 1–glycine 24 is disordered.

It belongs to the universal ribosomal protein uL16 family. In terms of assembly, part of the 50S ribosomal subunit.

In terms of biological role, binds 23S rRNA and is also seen to make contacts with the A and possibly P site tRNAs. This is Large ribosomal subunit protein uL16 from Pelodictyon phaeoclathratiforme (strain DSM 5477 / BU-1).